Here is a 281-residue protein sequence, read N- to C-terminus: CDAN1-interacting nuclease 1 (281 aa).

The residue at position 114 (threonine 114) is a Phosphothreonine.

Its subcellular location is the nucleus. The protein localises to the cytoplasm. Functionally, plays a role in erythroid cell differentiation. The polypeptide is CDAN1-interacting nuclease 1 (Homo sapiens (Human)).